A 166-amino-acid polypeptide reads, in one-letter code: Thiol peroxidase (166 aa).

The region spanning 18–166 (LKVGDKAPDV…NYEALLKVLK (149 aa)) is the Thioredoxin domain. Cys60 serves as the catalytic Cysteine sulfenic acid (-SOH) intermediate. Cys60 and Cys94 are oxidised to a cystine.

Belongs to the peroxiredoxin family. Tpx subfamily. In terms of assembly, homodimer.

The enzyme catalyses a hydroperoxide + [thioredoxin]-dithiol = an alcohol + [thioredoxin]-disulfide + H2O. Thiol-specific peroxidase that catalyzes the reduction of hydrogen peroxide and organic hydroperoxides to water and alcohols, respectively. Plays a role in cell protection against oxidative stress by detoxifying peroxides. The protein is Thiol peroxidase of Helicobacter pylori (strain ATCC 700392 / 26695) (Campylobacter pylori).